The following is a 304-amino-acid chain: Probable endonuclease 4 (304 aa).

Zn(2+)-binding residues include H75, H115, E151, D185, H188, H221, D234, H236, and E266.

The protein belongs to the AP endonuclease 2 family. Requires Zn(2+) as cofactor.

It carries out the reaction Endonucleolytic cleavage to 5'-phosphooligonucleotide end-products.. Its function is as follows. Endonuclease IV plays a role in DNA repair. It cleaves phosphodiester bonds at apurinic or apyrimidinic (AP) sites, generating a 3'-hydroxyl group and a 5'-terminal sugar phosphate. This is Probable endonuclease 4 from Ureaplasma urealyticum serovar 10 (strain ATCC 33699 / Western).